Reading from the N-terminus, the 94-residue chain is Small nuclear ribonucleoprotein E (94 aa).

The region spanning 14 to 94 (INCIFNFLQQ…DNITLITSAD (81 aa)) is the Sm domain.

The protein belongs to the snRNP Sm proteins family. Component of the Sm core complex, present in spliceosomal snRNP U1, U2, U4/U6 and U5. The core complex contains SMB1, SMD1, SMD2, SMD3, SME1, SMX3 and SMX2 (Sm proteins B, D1, D2, D3, E, F and G, respectively), and is probably a heptameric ring structure. SME1 specifically interacts with SMX2 and SMX3. Component of the U4/U6-U5 tri-snRNP complex composed of the U4, U6 and U5 snRNAs and at least PRP3, PRP4, PRP6, PRP8, PRP18, PRP31, PRP38, SNU13, SNU23, SNU66, SNU114, SPP381, SMB1, SMD1, SMD2, SMD3, SMX2, SMX3, LSM2, LSM3, LSM4, LSM5, LSM6, LSM7, LSM8, BRR2 and DIB1.

Its subcellular location is the cytoplasm. The protein localises to the nucleus. In terms of biological role, involved in pre-mRNA splicing. Binds and is required for the stability of snRNA U1, U2, U4 and U5 which contain a highly conserved structural motif called the Sm binding site. Involved in cap modification. The sequence is that of Small nuclear ribonucleoprotein E (SME1) from Saccharomyces cerevisiae (strain ATCC 204508 / S288c) (Baker's yeast).